We begin with the raw amino-acid sequence, 491 residues long: UDP-N-acetylmuramate--L-alanine ligase (491 aa).

Glycine 126–threonine 132 contacts ATP.

It belongs to the MurCDEF family.

It is found in the cytoplasm. It carries out the reaction UDP-N-acetyl-alpha-D-muramate + L-alanine + ATP = UDP-N-acetyl-alpha-D-muramoyl-L-alanine + ADP + phosphate + H(+). The protein operates within cell wall biogenesis; peptidoglycan biosynthesis. In terms of biological role, cell wall formation. This is UDP-N-acetylmuramate--L-alanine ligase from Salmonella paratyphi A (strain ATCC 9150 / SARB42).